Here is a 250-residue protein sequence, read N- to C-terminus: Exosome complex component Rrp41 (250 aa).

It belongs to the RNase PH family. Rrp41 subfamily. In terms of assembly, component of the archaeal exosome complex. Forms a hexameric ring-like arrangement composed of 3 Rrp41-Rrp42 heterodimers. The hexameric ring associates with a trimer of Rrp4 and/or Csl4 subunits.

The protein localises to the cytoplasm. Functionally, catalytic component of the exosome, which is a complex involved in RNA degradation. Has 3'-&gt;5' exoribonuclease activity. Can also synthesize heteromeric RNA-tails. The chain is Exosome complex component Rrp41 from Pyrococcus furiosus (strain ATCC 43587 / DSM 3638 / JCM 8422 / Vc1).